Consider the following 251-residue polypeptide: POU class 2 homeobox associating factor 3 (251 aa).

The OCA domain occupies 5–27 (PKVYQGVRVKITVKELLQQRRAH). Positions 24–45 (RRAHQAASGGTRSGGSSVHLSD) are disordered. The segment covering 31–40 (SGGTRSGGSS) has biased composition (low complexity).

This sequence belongs to the POU2AF family. Interacts with POU2F3 in a DNA-dependent manner; this interaction increases POU2F3 transactivation activity. Expressed in many cell types of epithelial, mesenchymal and hematopoietic origins. Expressed in tufs cells.

Its subcellular location is the cytoplasm. It localises to the nucleus. Its function is as follows. Transcriptional coactivator that specifically associates with POU2F3. This complex drives the development of tuft cells, a rare a rare chemosensory cells that coordinate immune and neural functions within mucosal epithelial tissues. The polypeptide is POU class 2 homeobox associating factor 3 (Homo sapiens (Human)).